The chain runs to 353 residues: Protein MGF 360-11L (353 aa).

It belongs to the asfivirus MGF 360 family. In terms of assembly, interacts with host TBK1 ad IRF7.

Functionally, plays a role in virus cell tropism, and may be required for efficient virus replication in macrophages. In addition, inhibits the phosphorylation of host TBK1 and IRF7 and thereby negatively regulates the host cGAS signaling pathway and antagonizes IFN-mediated antiviral activity. This chain is Protein MGF 360-11L, found in Ornithodoros (relapsing fever ticks).